Reading from the N-terminus, the 342-residue chain is D-erythrose-4-phosphate dehydrogenase (342 aa).

11-12 contributes to the NAD(+) binding site; that stretch reads RV. Substrate contacts are provided by residues 153–155, Arg199, 212–213, and Arg235; these read SCT and TK. Cys154 functions as the Nucleophile in the catalytic mechanism. Residue Asn317 coordinates NAD(+).

The protein belongs to the glyceraldehyde-3-phosphate dehydrogenase family. Epd subfamily. As to quaternary structure, homotetramer.

The protein resides in the cytoplasm. The enzyme catalyses D-erythrose 4-phosphate + NAD(+) + H2O = 4-phospho-D-erythronate + NADH + 2 H(+). The protein operates within cofactor biosynthesis; pyridoxine 5'-phosphate biosynthesis; pyridoxine 5'-phosphate from D-erythrose 4-phosphate: step 1/5. Its function is as follows. Catalyzes the NAD-dependent conversion of D-erythrose 4-phosphate to 4-phosphoerythronate. This is D-erythrose-4-phosphate dehydrogenase from Pseudoalteromonas atlantica (strain T6c / ATCC BAA-1087).